We begin with the raw amino-acid sequence, 85 residues long: Homeobox protein knotted-1-like 8 (85 aa).

Residues E1–F21 form the ELK domain. A DNA-binding region (homeobox; TALE-type) is located at residues S22–A85.

Belongs to the TALE/KNOX homeobox family. In terms of tissue distribution, strongly expressed in ear inflorescence primordia and shoot meristem. Weakly expressed in embryos. Absent from leaves.

The protein localises to the nucleus. In terms of biological role, probably binds to the DNA sequence 5'-TGAC-3'. The polypeptide is Homeobox protein knotted-1-like 8 (KNOX8) (Zea mays (Maize)).